A 728-amino-acid chain; its full sequence is Hepatocyte growth factor (728 aa).

A signal peptide spans 1 to 32 (MMWGTKLLPVLLLQHVLLHLLLLPVTIPYAEG). Pyrrolidone carboxylic acid is present on Q33. Residues 38–124 (NTLHEFKKSA…HEFDLYENKD (87 aa)) form the PAN domain. Cystine bridges form between C71/C97, C75/C85, C129/C207, C150/C190, C178/C202, C212/C289, C233/C272, and C261/C284. Kringle domains follow at residues 129-207 (CIIG…IPQC) and 212-289 (CMTC…IKMC). N-linked (GlcNAc...) asparagine glycosylation occurs at N295. Disulfide bonds link C306/C384, C327/C366, C355/C378, C392/C470, C413/C453, C441/C465, C488/C607, C520/C536, C615/C682, C645/C661, and C672/C700. Kringle domains are found at residues 306–384 (CIKG…IPKC) and 392–470 (CYRG…ISRC). N-linked (GlcNAc...) asparagine glycosylation occurs at N403. Residues 496–724 (VVNGIPTQTT…YAKWIHKVIL (229 aa)) form the Peptidase S1 domain. N569 and N656 each carry an N-linked (GlcNAc...) asparagine glycan.

This sequence belongs to the peptidase S1 family. Plasminogen subfamily. In terms of assembly, dimer of an alpha chain and a beta chain linked by a disulfide bond. Interacts with SRPX2; the interaction increases HGF mitogenic activity. The single-chain precursor undergoes proteolytic processing by TMPRSS13 resulting in an active two-chain form. The single-chain precursor undergoes proteolytic processing by HGFAC resulting in an active two-chain form.

In terms of biological role, potent mitogen for mature parenchymal hepatocyte cells, seems to be a hepatotrophic factor, and acts as a growth factor for a broad spectrum of tissues and cell types. Activating ligand for the receptor tyrosine kinase MET by binding to it and promoting its dimerization. Activates MAPK signaling following TMPRSS13 cleavage and activation. This is Hepatocyte growth factor (Hgf) from Rattus norvegicus (Rat).